Reading from the N-terminus, the 582-residue chain is Protein NARROW LEAF 1 (582 aa).

Disordered regions lie at residues 1-26 (MKPS…VDHQ) and 531-582 (GMSP…DLEK). A compositionally biased stretch (basic and acidic residues) spans 562 to 572 (LGDREPKRLRS). A Nuclear localization signal motif is present at residues 567–573 (PKRLRSD). The span at 573–582 (DSGSSLDLEK) shows a compositional bias: low complexity.

In terms of tissue distribution, expressed in leaf sheaths, leaf blades, culms and panicles. Preferentially expressed in vascular tissues in leaves and culms.

Its subcellular location is the nucleus. The protein resides in the nucleoplasm. The protein localises to the cytoplasm. Involved in the regulation of lateral leaf growth. May be involved in the regulation of basipetal polar auxin transport (PAT) and vascular patterning in leaves. Controls photosynthesis rate by regulating carboxylation efficiency and consequently photosynthesis rate. Controls panicle and spikelet numbers, and grain yield. The polypeptide is Protein NARROW LEAF 1 (Oryza sativa subsp. japonica (Rice)).